The chain runs to 380 residues: Chaperone protein DnaJ (380 aa).

In terms of domain architecture, J spans 5–70 (DYYEVLGLQK…EKRAAYDQYG (66 aa)). The segment at 136 to 214 (GCKKDIRIST…CHGDGRVQKA (79 aa)) adopts a CR-type zinc-finger fold. Residues Cys-149, Cys-152, Cys-166, Cys-169, Cys-188, Cys-191, Cys-202, and Cys-205 each contribute to the Zn(2+) site. CXXCXGXG motif repeat units lie at residues 149–156 (CDTCHGSG), 166–173 (CSHCHGSG), 188–195 (CPSCHGSG), and 202–209 (CKSCHGDG).

This sequence belongs to the DnaJ family. In terms of assembly, homodimer. Zn(2+) is required as a cofactor.

It localises to the cytoplasm. In terms of biological role, participates actively in the response to hyperosmotic and heat shock by preventing the aggregation of stress-denatured proteins and by disaggregating proteins, also in an autonomous, DnaK-independent fashion. Unfolded proteins bind initially to DnaJ; upon interaction with the DnaJ-bound protein, DnaK hydrolyzes its bound ATP, resulting in the formation of a stable complex. GrpE releases ADP from DnaK; ATP binding to DnaK triggers the release of the substrate protein, thus completing the reaction cycle. Several rounds of ATP-dependent interactions between DnaJ, DnaK and GrpE are required for fully efficient folding. Also involved, together with DnaK and GrpE, in the DNA replication of plasmids through activation of initiation proteins. The sequence is that of Chaperone protein DnaJ from Actinobacillus pleuropneumoniae serotype 5b (strain L20).